Consider the following 428-residue polypeptide: Adenylosuccinate synthetase (428 aa).

GTP contacts are provided by residues 12–18 (GDEGKGK) and 40–42 (GHT). D13 acts as the Proton acceptor in catalysis. Mg(2+) is bound by residues D13 and G40. IMP-binding positions include 13–16 (DEGK), 38–41 (NAGH), T130, R144, Q224, T239, and R303. H41 functions as the Proton donor in the catalytic mechanism. 299-305 (VTTGRSR) serves as a coordination point for substrate. GTP-binding positions include R305, 331-333 (KID), and 413-415 (GVG).

It belongs to the adenylosuccinate synthetase family. As to quaternary structure, homodimer. Requires Mg(2+) as cofactor.

The protein localises to the cytoplasm. It carries out the reaction IMP + L-aspartate + GTP = N(6)-(1,2-dicarboxyethyl)-AMP + GDP + phosphate + 2 H(+). It functions in the pathway purine metabolism; AMP biosynthesis via de novo pathway; AMP from IMP: step 1/2. Its function is as follows. Plays an important role in the de novo pathway of purine nucleotide biosynthesis. Catalyzes the first committed step in the biosynthesis of AMP from IMP. In Clostridium perfringens (strain 13 / Type A), this protein is Adenylosuccinate synthetase.